A 474-amino-acid chain; its full sequence is Ribulose bisphosphate carboxylase large chain (474 aa).

2 residues coordinate substrate: Asn123 and Thr173. The Proton acceptor role is filled by Lys175. Lys177 contributes to the substrate binding site. Mg(2+)-binding residues include Lys201, Asp203, and Glu204. Lys201 carries the N6-carboxylysine modification. His293 functions as the Proton acceptor in the catalytic mechanism. Substrate contacts are provided by Arg294, His326, and Ser378.

It belongs to the RuBisCO large chain family. Type I subfamily. Heterohexadecamer of 8 large chains and 8 small chains; disulfide-linked. The disulfide link is formed within the large subunit homodimers. The cofactor is Mg(2+). In terms of processing, the disulfide bond which can form in the large chain dimeric partners within the hexadecamer appears to be associated with oxidative stress and protein turnover.

Its subcellular location is the carboxysome. The enzyme catalyses 2 (2R)-3-phosphoglycerate + 2 H(+) = D-ribulose 1,5-bisphosphate + CO2 + H2O. The catalysed reaction is D-ribulose 1,5-bisphosphate + O2 = 2-phosphoglycolate + (2R)-3-phosphoglycerate + 2 H(+). In terms of biological role, ruBisCO catalyzes two reactions: the carboxylation of D-ribulose 1,5-bisphosphate, the primary event in carbon dioxide fixation, as well as the oxidative fragmentation of the pentose substrate in the photorespiration process. Both reactions occur simultaneously and in competition at the same active site. The sequence is that of Ribulose bisphosphate carboxylase large chain from Synechococcus sp.